A 391-amino-acid chain; its full sequence is Putative gustatory receptor 36a (391 aa).

The Cytoplasmic portion of the chain corresponds to 1-3 (MFD). A helical transmembrane segment spans residues 4 to 24 (WVGLLLKVLYYYGQIIGLINF). Residues 25–38 (EIDWQRGRVVAAQR) lie on the Extracellular side of the membrane. The helical transmembrane segment at 39-59 (GILFAIAINVLICMVLLLQIS) threads the bilayer. Residues 60–73 (KKFNLDVYFGRANQ) are Cytoplasmic-facing. The helical transmembrane segment at 74–94 (LHQYVIIVMVSLRMASGISAI) threads the bilayer. The Extracellular segment spans residues 95–126 (LNRWRQRAQLMRLVECVLRLFLKKPHVKQMSR). A helical transmembrane segment spans residues 127–147 (WAILVKFSVGVVSNFLQMAIS). Topologically, residues 148–165 (MESLDRLGFNEFVGMASD) are cytoplasmic. A helical transmembrane segment spans residues 166 to 186 (FWMSAIINMAISQHYLVILFV). Residues 187–247 (RAYYHLLKTE…LQSIVTQLNQ (61 aa)) are Extracellular-facing. A helical transmembrane segment spans residues 248 to 268 (VFGIQGIMVYGGYYIFSVATT). Topologically, residues 269-290 (YITYSLAINGIEELHLSVRAAA) are cytoplasmic. The chain crosses the membrane as a helical span at residues 291-311 (LVFSWFLFYYTSAILNLFVML). The Extracellular portion of the chain corresponds to 312–391 (KLFDDHKEME…FLIQYDMEYF (80 aa)).

This sequence belongs to the insect chemoreceptor superfamily. Gustatory receptor (GR) family. Gr22e subfamily.

It is found in the cell membrane. Its function is as follows. Probable gustatory receptor which mediates acceptance or avoidance behavior, depending on its substrates. This chain is Putative gustatory receptor 36a (Gr36a), found in Drosophila melanogaster (Fruit fly).